We begin with the raw amino-acid sequence, 185 residues long: Ribosome-recycling factor (185 aa).

The protein belongs to the RRF family.

It localises to the cytoplasm. Responsible for the release of ribosomes from messenger RNA at the termination of protein biosynthesis. May increase the efficiency of translation by recycling ribosomes from one round of translation to another. This chain is Ribosome-recycling factor, found in Campylobacter concisus (strain 13826).